Here is a 229-residue protein sequence, read N- to C-terminus: Synaptogyrin-3 (229 aa).

N-acetylmethionine is present on Met-1. Residues 20–172 (FARRPQTLLR…LTVKALQRFR (153 aa)) enclose the MARVEL domain. The next 4 helical transmembrane spans lie at 30 to 50 (VASW…GYVN), 70 to 90 (FGVA…LLDV), 105 to 125 (VLLD…GFCF), and 148 to 168 (AVIT…VKAL).

Belongs to the synaptogyrin family. As to quaternary structure, interacts (via N-terminus) with SLC6A3 (via N-terminus). May interact with VMAT2.

The protein localises to the cytoplasmic vesicle. It is found in the secretory vesicle. Its subcellular location is the synaptic vesicle membrane. The protein resides in the synapse. May play a role in regulated exocytosis. May indirectly regulate the activity of the plasma membrane dopamine transporter SLC6A3 and thereby regulate dopamine transport back from the synaptic cleft into the presynaptic terminal. The polypeptide is Synaptogyrin-3 (Bos taurus (Bovine)).